A 150-amino-acid polypeptide reads, in one-letter code: UPF0756 membrane protein Asuc_1151 (150 aa).

The next 4 helical transmembrane spans lie at 1–21 (MSLHFNSIGFLLVVLALLGVL), 52–72 (YGLNIGVIILTIGVLSPIVAG), 82–102 (LLHWKMFLSLVVGMLVAWLAG), and 123–143 (ILGVGLLGGIPVGPLIAAGIL).

It belongs to the UPF0756 family.

The protein resides in the cell membrane. The protein is UPF0756 membrane protein Asuc_1151 of Actinobacillus succinogenes (strain ATCC 55618 / DSM 22257 / CCUG 43843 / 130Z).